Reading from the N-terminus, the 436-residue chain is GTPase Der (436 aa).

EngA-type G domains are found at residues 4-167 (PTIA…PNEE) and 175-351 (IKFS…QSQN). Residues 10-17 (GRPNVGKS), 57-61 (DTGGI), 119-122 (NKVD), 181-188 (GRPNVGKS), 229-233 (DTAGM), and 294-297 (NKWD) each bind GTP. The 85-residue stretch at 352–436 (TRIPSAVLND…PIHLIARKRK (85 aa)) folds into the KH-like domain.

This sequence belongs to the TRAFAC class TrmE-Era-EngA-EngB-Septin-like GTPase superfamily. EngA (Der) GTPase family. In terms of assembly, associates with the 50S ribosomal subunit.

Functionally, GTPase that plays an essential role in the late steps of ribosome biogenesis. This Streptococcus gordonii (strain Challis / ATCC 35105 / BCRC 15272 / CH1 / DL1 / V288) protein is GTPase Der.